The primary structure comprises 181 residues: MDNLKEEETNEINYIIDQLQKLNKKFKIYTVQRFKEEEPFNKYISESVSKKTRLLIHGTRCSSVIPILQTGLKIRPSTSVHFSGKVYGEGNYFSEHVQKSLNYTGWDNDQILLIYEVHVGNEYIYEGWYNGDRGIKLNYNELLQNGYNSTYVKAGNGLQNSEIISYNEDQSKIKYIIHITK.

The 181-residue stretch at 1-181 folds into the PARP catalytic domain; the sequence is MDNLKEEETN…KIKYIIHITK (181 aa).

The enzyme catalyses NAD(+) + (ADP-D-ribosyl)n-acceptor = nicotinamide + (ADP-D-ribosyl)n+1-acceptor + H(+).. The chain is Putative poly [ADP-ribose] polymerase-like 100L from Invertebrate iridescent virus 6 (IIV-6).